The primary structure comprises 103 residues: Large ribosomal subunit protein bL21 (103 aa).

It belongs to the bacterial ribosomal protein bL21 family. In terms of assembly, part of the 50S ribosomal subunit. Contacts protein L20.

Functionally, this protein binds to 23S rRNA in the presence of protein L20. This chain is Large ribosomal subunit protein bL21, found in Legionella pneumophila (strain Paris).